The primary structure comprises 51 residues: Mating pheromone Er-23 (51 aa).

5 disulfides stabilise this stretch: C3-C24, C6-C16, C13-C47, C27-C40, and C35-C51.

It localises to the secreted. Mating ciliate pheromones (or gamones) are diffusible extracellular communication signals that distinguish different intraspecific classes of cells commonly referred to as 'mating types'. They prepare the latter for conjugation by changing their cell surface properties. The polypeptide is Mating pheromone Er-23 (MAT23) (Euplotes raikovi).